The primary structure comprises 760 residues: Xaa-Pro dipeptidyl-peptidase (760 aa).

Catalysis depends on charge relay system residues Ser-349, Asp-469, and His-499.

Belongs to the peptidase S15 family. In terms of assembly, homodimer.

It localises to the cytoplasm. It catalyses the reaction Hydrolyzes Xaa-Pro-|- bonds to release unblocked, N-terminal dipeptides from substrates including Ala-Pro-|-p-nitroanilide and (sequentially) Tyr-Pro-|-Phe-Pro-|-Gly-Pro-|-Ile.. Removes N-terminal dipeptides sequentially from polypeptides having unsubstituted N-termini provided that the penultimate residue is proline. The protein is Xaa-Pro dipeptidyl-peptidase of Streptococcus pyogenes serotype M18 (strain MGAS8232).